A 409-amino-acid chain; its full sequence is Protein ROOT PRIMORDIUM DEFECTIVE 1 (409 aa).

The PORR domain occupies 47-386 (VRDHGYDNYM…RLAELVLMSP (340 aa)).

Expressed in roots, hypocotyls, cotyledons and shoot apex.

In terms of biological role, involved in pre-arranging the maintenance of the active cell proliferation during root primordium development. Does not seem to be involved in cell cycle progression. This Arabidopsis thaliana (Mouse-ear cress) protein is Protein ROOT PRIMORDIUM DEFECTIVE 1 (RPD1).